We begin with the raw amino-acid sequence, 294 residues long: Lipoyl synthase (294 aa).

7 residues coordinate [4Fe-4S] cluster: C35, C40, C46, C61, C65, C68, and S275. Residues C46–R264 form the Radical SAM core domain.

It belongs to the radical SAM superfamily. Lipoyl synthase family. [4Fe-4S] cluster serves as cofactor.

Its subcellular location is the cytoplasm. The enzyme catalyses [[Fe-S] cluster scaffold protein carrying a second [4Fe-4S](2+) cluster] + N(6)-octanoyl-L-lysyl-[protein] + 2 oxidized [2Fe-2S]-[ferredoxin] + 2 S-adenosyl-L-methionine + 4 H(+) = [[Fe-S] cluster scaffold protein] + N(6)-[(R)-dihydrolipoyl]-L-lysyl-[protein] + 4 Fe(3+) + 2 hydrogen sulfide + 2 5'-deoxyadenosine + 2 L-methionine + 2 reduced [2Fe-2S]-[ferredoxin]. Its pathway is protein modification; protein lipoylation via endogenous pathway; protein N(6)-(lipoyl)lysine from octanoyl-[acyl-carrier-protein]: step 2/2. Functionally, catalyzes the radical-mediated insertion of two sulfur atoms into the C-6 and C-8 positions of the octanoyl moiety bound to the lipoyl domains of lipoate-dependent enzymes, thereby converting the octanoylated domains into lipoylated derivatives. The polypeptide is Lipoyl synthase (Anaeromyxobacter dehalogenans (strain 2CP-C)).